The chain runs to 621 residues: Phosphoenolpyruvate carboxykinase [GTP] (621 aa).

Substrate-binding positions include Arg-83 and 217–219; that span reads YGG. Mn(2+)-binding residues include Lys-226 and His-245. Ser-267 provides a ligand contact to substrate. 268–273 contacts GTP; sequence MCGKTS. Cys-269 is a catalytic residue. Asp-286 lines the Mn(2+) pocket. 381–383 contacts substrate; sequence NAR. Residues Arg-383 and Arg-415 each coordinate GTP.

It belongs to the phosphoenolpyruvate carboxykinase [GTP] family. Requires Mn(2+) as cofactor.

It is found in the cytoplasm. The enzyme catalyses oxaloacetate + GTP = phosphoenolpyruvate + GDP + CO2. It participates in carbohydrate biosynthesis; gluconeogenesis. Functionally, catalyzes the conversion of oxaloacetate (OAA) to phosphoenolpyruvate (PEP), the rate-limiting step in the metabolic pathway that produces glucose from lactate and other precursors derived from the citric acid cycle. This is Phosphoenolpyruvate carboxykinase [GTP] from Pyrococcus horikoshii (strain ATCC 700860 / DSM 12428 / JCM 9974 / NBRC 100139 / OT-3).